Here is a 103-residue protein sequence, read N- to C-terminus: Protein translation factor SUI1 homolog (103 aa).

The protein belongs to the SUI1 family.

The chain is Protein translation factor SUI1 homolog from Methanocaldococcus jannaschii (strain ATCC 43067 / DSM 2661 / JAL-1 / JCM 10045 / NBRC 100440) (Methanococcus jannaschii).